A 180-amino-acid polypeptide reads, in one-letter code: Peptidyl-tRNA hydrolase (180 aa).

Tyrosine 15 provides a ligand contact to tRNA. Histidine 20 functions as the Proton acceptor in the catalytic mechanism. TRNA contacts are provided by phenylalanine 67, asparagine 69, and asparagine 115.

It belongs to the PTH family. In terms of assembly, monomer.

It localises to the cytoplasm. The enzyme catalyses an N-acyl-L-alpha-aminoacyl-tRNA + H2O = an N-acyl-L-amino acid + a tRNA + H(+). Functionally, hydrolyzes ribosome-free peptidyl-tRNAs (with 1 or more amino acids incorporated), which drop off the ribosome during protein synthesis, or as a result of ribosome stalling. Catalyzes the release of premature peptidyl moieties from peptidyl-tRNA molecules trapped in stalled 50S ribosomal subunits, and thus maintains levels of free tRNAs and 50S ribosomes. The protein is Peptidyl-tRNA hydrolase of Chlamydia pneumoniae (Chlamydophila pneumoniae).